Reading from the N-terminus, the 200-residue chain is Imidazole glycerol phosphate synthase subunit HisH (200 aa).

One can recognise a Glutamine amidotransferase type-1 domain in the interval 3 to 200 (DVALIDAGGA…LHNFLEMSFP (198 aa)). Catalysis depends on C78, which acts as the Nucleophile. Catalysis depends on residues H179 and E181.

In terms of assembly, heterodimer of HisH and HisF.

It is found in the cytoplasm. The enzyme catalyses 5-[(5-phospho-1-deoxy-D-ribulos-1-ylimino)methylamino]-1-(5-phospho-beta-D-ribosyl)imidazole-4-carboxamide + L-glutamine = D-erythro-1-(imidazol-4-yl)glycerol 3-phosphate + 5-amino-1-(5-phospho-beta-D-ribosyl)imidazole-4-carboxamide + L-glutamate + H(+). It carries out the reaction L-glutamine + H2O = L-glutamate + NH4(+). The protein operates within amino-acid biosynthesis; L-histidine biosynthesis; L-histidine from 5-phospho-alpha-D-ribose 1-diphosphate: step 5/9. IGPS catalyzes the conversion of PRFAR and glutamine to IGP, AICAR and glutamate. The HisH subunit catalyzes the hydrolysis of glutamine to glutamate and ammonia as part of the synthesis of IGP and AICAR. The resulting ammonia molecule is channeled to the active site of HisF. The polypeptide is Imidazole glycerol phosphate synthase subunit HisH (Xanthomonas oryzae pv. oryzae (strain MAFF 311018)).